The chain runs to 899 residues: DNA mismatch repair protein MutS (899 aa).

A disordered region spans residues 1–20; that stretch reads MGLQKKTDPEQAQADSAASR. 631–638 provides a ligand contact to ATP; that stretch reads GPNMGGKS. The segment at 832-852 is disordered; it reads PPTPDDDEDDFGAAPSAVPAP. Low complexity predominate over residues 843–852; it reads GAAPSAVPAP.

It belongs to the DNA mismatch repair MutS family.

This protein is involved in the repair of mismatches in DNA. It is possible that it carries out the mismatch recognition step. This protein has a weak ATPase activity. The protein is DNA mismatch repair protein MutS of Cupriavidus necator (strain ATCC 17699 / DSM 428 / KCTC 22496 / NCIMB 10442 / H16 / Stanier 337) (Ralstonia eutropha).